We begin with the raw amino-acid sequence, 366 residues long: 5-hydroxytryptamine receptor 1F (366 aa).

Over 1 to 24 the chain is Extracellular; it reads MDFLNASDQNLTSEELLNRMPSKI. N-linked (GlcNAc...) asparagine glycans are attached at residues Asn5 and Asn10. Residues 25–49 traverse the membrane as a helical segment; the sequence is LVSLTLSGLALMTTTINSLVIAAII. Residues 50 to 59 lie on the Cytoplasmic side of the membrane; it reads VTRKLHHPAN. Residues 60 to 81 form a helical membrane-spanning segment; it reads YLICSLAVTDFLVAVLVMPFSI. Over 82-96 the chain is Extracellular; sequence VYIVRESWIMGQVLC. A disulfide bridge links Cys96 with Cys172. A helical membrane pass occupies residues 97–119; sequence DIWLSVDIICCTCSILHLSAIAL. Asp103 and Cys107 together coordinate serotonin. A DRY motif; important for ligand-induced conformation changes motif is present at residues 120–122; the sequence is DRY. The Cytoplasmic portion of the chain corresponds to 120–139; that stretch reads DRYRAITDAVEYARKRTPRH. A helical membrane pass occupies residues 140-159; it reads AGIMITIVWVISVFISMPPL. Residues 160 to 178 are Extracellular-facing; that stretch reads FWRHQGTSRDDECVIKHDH. Residues 179 to 202 form a helical membrane-spanning segment; it reads IVSTIYSTFGAFYIPLVLILILYY. Residues 203–291 lie on the Cytoplasmic side of the membrane; the sequence is KIYRAARTLY…KISGTRERKA (89 aa). The chain crosses the membrane as a helical span at residues 292–315; that stretch reads ATTLGLILGAFVICWLPFFVKELV. Topologically, residues 316–327 are extracellular; it reads VNVCEKCKISEE. A helical transmembrane segment spans residues 328–350; it reads MSNFLAWLGYLNSLINPLIYTIF. Residues 343–347 carry the NPxxY motif; important for ligand-induced conformation changes and signaling motif; that stretch reads NPLIY. Topologically, residues 351–366 are cytoplasmic; the sequence is NEDFKKAFQKLVRCRY.

Belongs to the G-protein coupled receptor 1 family. Detected in hippocampus.

It localises to the cell membrane. Its function is as follows. G-protein coupled receptor for 5-hydroxytryptamine (serotonin). Also functions as a receptor for various alkaloids and psychoactive substances. Ligand binding causes a conformation change that triggers signaling via guanine nucleotide-binding proteins (G proteins) and modulates the activity of downstream effectors, such as adenylate cyclase. HTR1F is coupled to G(i)/G(o) G alpha proteins and mediates inhibitory neurotransmission by inhibiting adenylate cyclase activity. This Mus musculus (Mouse) protein is 5-hydroxytryptamine receptor 1F (Htr1f).